The following is a 192-amino-acid chain: Ribose 1,5-bisphosphate phosphokinase PhnN (192 aa).

15 to 22 (GPSGAGKD) serves as a coordination point for ATP.

Belongs to the ribose 1,5-bisphosphokinase family.

It carries out the reaction alpha-D-ribose 1,5-bisphosphate + ATP = 5-phospho-alpha-D-ribose 1-diphosphate + ADP. Its pathway is metabolic intermediate biosynthesis; 5-phospho-alpha-D-ribose 1-diphosphate biosynthesis; 5-phospho-alpha-D-ribose 1-diphosphate from D-ribose 5-phosphate (route II): step 3/3. Catalyzes the phosphorylation of ribose 1,5-bisphosphate to 5-phospho-D-ribosyl alpha-1-diphosphate (PRPP). The sequence is that of Ribose 1,5-bisphosphate phosphokinase PhnN from Brucella abortus biovar 1 (strain 9-941).